We begin with the raw amino-acid sequence, 255 residues long: ATP synthase subunit b 1 (255 aa).

The chain crosses the membrane as a helical span at residues 5-22 (WITVAAQIVNFLLLIWLL).

The protein belongs to the ATPase B chain family. As to quaternary structure, F-type ATPases have 2 components, F(1) - the catalytic core - and F(0) - the membrane proton channel. F(1) has five subunits: alpha(3), beta(3), gamma(1), delta(1), epsilon(1). F(0) has three main subunits: a(1), b(2) and c(10-14). The alpha and beta chains form an alternating ring which encloses part of the gamma chain. F(1) is attached to F(0) by a central stalk formed by the gamma and epsilon chains, while a peripheral stalk is formed by the delta and b chains.

The protein resides in the cell inner membrane. In terms of biological role, f(1)F(0) ATP synthase produces ATP from ADP in the presence of a proton or sodium gradient. F-type ATPases consist of two structural domains, F(1) containing the extramembraneous catalytic core and F(0) containing the membrane proton channel, linked together by a central stalk and a peripheral stalk. During catalysis, ATP synthesis in the catalytic domain of F(1) is coupled via a rotary mechanism of the central stalk subunits to proton translocation. Functionally, component of the F(0) channel, it forms part of the peripheral stalk, linking F(1) to F(0). In Dinoroseobacter shibae (strain DSM 16493 / NCIMB 14021 / DFL 12), this protein is ATP synthase subunit b 1.